We begin with the raw amino-acid sequence, 216 residues long: Ribosomal RNA large subunit methyltransferase E (216 aa).

S-adenosyl-L-methionine-binding residues include Gly-60, Trp-62, Asp-80, Asp-96, and Asp-121. Lys-161 acts as the Proton acceptor in catalysis.

Belongs to the class I-like SAM-binding methyltransferase superfamily. RNA methyltransferase RlmE family.

The protein localises to the cytoplasm. It catalyses the reaction uridine(2552) in 23S rRNA + S-adenosyl-L-methionine = 2'-O-methyluridine(2552) in 23S rRNA + S-adenosyl-L-homocysteine + H(+). Its function is as follows. Specifically methylates the uridine in position 2552 of 23S rRNA at the 2'-O position of the ribose in the fully assembled 50S ribosomal subunit. This chain is Ribosomal RNA large subunit methyltransferase E, found in Pseudomonas savastanoi pv. phaseolicola (strain 1448A / Race 6) (Pseudomonas syringae pv. phaseolicola (strain 1448A / Race 6)).